The chain runs to 58 residues: MSYYYGNYYGGLGYGLGGFGGFGGLGYGYGSSYGLGGYGGYGYFSPSFYGGYLSSGFY.

The 12 X 2 AA repeats of G-[YCGS] stretch occupies residues 6–52; that stretch reads GNYYGGLGYGLGGFGGFGGLGYGYGSSYGLGGYGGYGYFSPSFYGGY.

The protein belongs to the KRTAP type 19 family. In terms of assembly, interacts with hair keratins.

Functionally, in the hair cortex, hair keratin intermediate filaments are embedded in an interfilamentous matrix, consisting of hair keratin-associated proteins (KRTAP), which are essential for the formation of a rigid and resistant hair shaft through their extensive disulfide bond cross-linking with abundant cysteine residues of hair keratins. The matrix proteins include the high-sulfur and high-glycine-tyrosine keratins. In Mus musculus (Mouse), this protein is Keratin-associated protein 19-9b (Krtap19-9b).